A 106-amino-acid chain; its full sequence is NADH dehydrogenase [ubiquinone] iron-sulfur protein 5 (106 aa).

The 45-residue stretch at 30 to 74 (PSRCHAFEKEWIECAHGIGSIRAEKECKIEFEDFRECLLRQKTMK) folds into the CHCH domain. 2 consecutive short sequence motifs (cx9C motif) follow at residues 33–43 (CHAFEKEWIEC) and 56–66 (CKIEFEDFREC). 2 disulfide bridges follow: cysteine 33–cysteine 66 and cysteine 43–cysteine 56. The disordered stretch occupies residues 84–106 (EKLIKEGKYTPPPHHSGQEEPRS).

This sequence belongs to the complex I NDUFS5 subunit family. In terms of assembly, mammalian complex I is composed of 45 different subunits. This is a component of the iron-sulfur (IP) fragment of the enzyme.

The protein resides in the mitochondrion inner membrane. The protein localises to the mitochondrion intermembrane space. In terms of biological role, accessory subunit of the mitochondrial membrane respiratory chain NADH dehydrogenase (Complex I), that is believed not to be involved in catalysis. Complex I functions in the transfer of electrons from NADH to the respiratory chain. The immediate electron acceptor for the enzyme is believed to be ubiquinone. The sequence is that of NADH dehydrogenase [ubiquinone] iron-sulfur protein 5 (NDUFS5) from Bos taurus (Bovine).